The sequence spans 339 residues: S-adenosylmethionine:tRNA ribosyltransferase-isomerase (339 aa).

The protein belongs to the QueA family. In terms of assembly, monomer.

The protein resides in the cytoplasm. The catalysed reaction is 7-aminomethyl-7-carbaguanosine(34) in tRNA + S-adenosyl-L-methionine = epoxyqueuosine(34) in tRNA + adenine + L-methionine + 2 H(+). The protein operates within tRNA modification; tRNA-queuosine biosynthesis. Functionally, transfers and isomerizes the ribose moiety from AdoMet to the 7-aminomethyl group of 7-deazaguanine (preQ1-tRNA) to give epoxyqueuosine (oQ-tRNA). The chain is S-adenosylmethionine:tRNA ribosyltransferase-isomerase from Campylobacter fetus subsp. fetus (strain 82-40).